The primary structure comprises 243 residues: Anti-H(O) lectin 1 (243 aa).

Residue asparagine 10 is glycosylated (N-linked (GlcNAc...) asparagine; partial). The N-linked (GlcNAc...) asparagine glycan is linked to asparagine 116. Positions 126 and 128 each coordinate Mn(2+). Ca(2+) contacts are provided by aspartate 128, asparagine 135, and aspartate 138. Mn(2+)-binding residues include aspartate 138 and histidine 143.

The protein belongs to the leguminous lectin family.

Functionally, L-fucose specific lectin. The sequence is that of Anti-H(O) lectin 1 from Ulex europaeus (Furze).